A 401-amino-acid polypeptide reads, in one-letter code: Tyrosine--tRNA ligase (401 aa).

A 'HIGH' region motif is present at residues 42–51 (PTAPDLHLGH). Residues 226 to 230 (KMSKS) carry the 'KMSKS' region motif. Lys-229 serves as a coordination point for ATP. The S4 RNA-binding domain occupies 336-397 (IALAQLLKQI…GKRRIAKLSI (62 aa)).

It belongs to the class-I aminoacyl-tRNA synthetase family. TyrS type 2 subfamily. In terms of assembly, homodimer.

Its subcellular location is the cytoplasm. It carries out the reaction tRNA(Tyr) + L-tyrosine + ATP = L-tyrosyl-tRNA(Tyr) + AMP + diphosphate + H(+). Functionally, catalyzes the attachment of tyrosine to tRNA(Tyr) in a two-step reaction: tyrosine is first activated by ATP to form Tyr-AMP and then transferred to the acceptor end of tRNA(Tyr). The protein is Tyrosine--tRNA ligase of Legionella pneumophila (strain Lens).